Reading from the N-terminus, the 105-residue chain is ATPase inhibitor A, mitochondrial (105 aa).

A disordered region spans residues 17–52 (MSSDQLGELGTGAGKGGGGGGSVRAAGGSFGRREAA). Residues 22–51 (LGELGTGAGKGGGGGGSVRAAGGSFGRREA) form an N-terminal inhibitory region region. A compositionally biased stretch (gly residues) spans 25-38 (LGTGAGKGGGGGGS). A coiled-coil region spans residues 58-105 (FRQKEREQLAALKNHHEEEIDHHKKEIERLQREIDRHKGKIRKLKHDD). The interval 73–105 (HEEEIDHHKKEIERLQREIDRHKGKIRKLKHDD) is antiparallel alpha-helical coiled coil region.

It belongs to the ATPase inhibitor family. Homodimer; represents the active form and is present at a pH value below 6.5. Homotetramer; represents the inactive form and is present at a pH value above 7.0.

Its subcellular location is the mitochondrion. Endogenous F(1)F(o)-ATPase inhibitor limiting ATP depletion when the mitochondrial membrane potential falls below a threshold and the F(1)F(o)-ATP synthase starts hydrolyzing ATP to pump protons out of the mitochondrial matrix. Required to avoid the consumption of cellular ATP when the F(1)F(o)-ATP synthase enzyme acts as an ATP hydrolase. Indirectly acts as a regulator of heme synthesis in erythroid tissues: regulates heme synthesis by modulating the mitochondrial pH and redox potential, allowing fech to efficiently catalyze the incorporation of iron into protoporphyrin IX to produce heme. The protein is ATPase inhibitor A, mitochondrial of Danio rerio (Zebrafish).